A 332-amino-acid polypeptide reads, in one-letter code: NADH-quinone oxidoreductase subunit H (332 aa).

Transmembrane regions (helical) follow at residues 4 to 24 (FAFF…IFAS), 44 to 64 (IGPD…MIKL), 78 to 98 (FIFA…LAAI), 120 to 140 (VALL…FLGG), 165 to 185 (VGAL…LVDI), 194 to 214 (FSWL…ALFI), 255 to 275 (IAGA…FWII), 279 to 299 (IMMI…RAAF), and 312 to 332 (YLIL…AVLL).

This sequence belongs to the complex I subunit 1 family. NDH-1 is composed of 14 different subunits. Subunits NuoA, H, J, K, L, M, N constitute the membrane sector of the complex.

It localises to the cell inner membrane. The enzyme catalyses a quinone + NADH + 5 H(+)(in) = a quinol + NAD(+) + 4 H(+)(out). Functionally, NDH-1 shuttles electrons from NADH, via FMN and iron-sulfur (Fe-S) centers, to quinones in the respiratory chain. The immediate electron acceptor for the enzyme in this species is believed to be ubiquinone. Couples the redox reaction to proton translocation (for every two electrons transferred, four hydrogen ions are translocated across the cytoplasmic membrane), and thus conserves the redox energy in a proton gradient. This subunit may bind ubiquinone. This is NADH-quinone oxidoreductase subunit H from Campylobacter jejuni subsp. jejuni serotype O:6 (strain 81116 / NCTC 11828).